We begin with the raw amino-acid sequence, 279 residues long: Large ribosomal subunit protein uL2 (279 aa).

The disordered stretch occupies residues Ala-224–Arg-279. The segment covering Val-269–Arg-279 has biased composition (basic residues).

It belongs to the universal ribosomal protein uL2 family. As to quaternary structure, part of the 50S ribosomal subunit. Forms a bridge to the 30S subunit in the 70S ribosome.

Its function is as follows. One of the primary rRNA binding proteins. Required for association of the 30S and 50S subunits to form the 70S ribosome, for tRNA binding and peptide bond formation. It has been suggested to have peptidyltransferase activity; this is somewhat controversial. Makes several contacts with the 16S rRNA in the 70S ribosome. This Cereibacter sphaeroides (strain ATCC 17029 / ATH 2.4.9) (Rhodobacter sphaeroides) protein is Large ribosomal subunit protein uL2.